The primary structure comprises 1045 residues: B3 domain-containing protein REM13 (1045 aa).

A DNA-binding region (TF-B3 1) is located at residues 7 to 96 (YPQFFHTLVP…VFHVSNLGPN (90 aa)). A disordered region spans residues 121 to 147 (NNGDVCDSEELPKEKKAKTNSEEADAV). Basic and acidic residues predominate over residues 130–141 (ELPKEKKAKTNS). 2 consecutive DNA-binding regions (TF-B3) follow at residues 157–253 (CFMA…FCPT) and 305–398 (FVTF…CSPE). Residues 423–449 (NRDKISNNDKEENMSWERKKDHLKSRD) form a disordered region. The TF-B3 4 DNA-binding region spans 474–570 (SNDSCLVVVS…TPVLSLCPAD (97 aa)). The disordered stretch occupies residues 606-625 (IKDDNSKEKNDKEESKSVDG). 3 consecutive DNA-binding regions (TF-B3) follow at residues 643-738 (FVTL…LRTE), 815-910 (FVTF…LRTK), and 940-1035 (FVTL…LKFS).

Its subcellular location is the nucleus. This is B3 domain-containing protein REM13 (REM13) from Arabidopsis thaliana (Mouse-ear cress).